The chain runs to 69 residues: Cell division protein ZapB (69 aa).

A coiled-coil region spans residues 6 to 68 (LEQLEARVQS…LGKMDQMNSE (63 aa)).

The protein belongs to the ZapB family. In terms of assembly, homodimer. The ends of the coiled-coil dimer bind to each other, forming polymers. Interacts with FtsZ.

It localises to the cytoplasm. Non-essential, abundant cell division factor that is required for proper Z-ring formation. It is recruited early to the divisome by direct interaction with FtsZ, stimulating Z-ring assembly and thereby promoting cell division earlier in the cell cycle. Its recruitment to the Z-ring requires functional FtsA or ZipA. This Tolumonas auensis (strain DSM 9187 / NBRC 110442 / TA 4) protein is Cell division protein ZapB.